Reading from the N-terminus, the 577-residue chain is MKTSQLFYKTSKNANKEASVLSYELLEKAGYIFKTAKGIYTYTPLFWRVALKMMDIIREELNAIGGQELVLPILHPAELWQKTGRWEAFRSEGLLYTVKDREDKEFCLAPTHEEIVSMFVSQWLSGRKQLPIHLYQIATKFRDEIRPRFGLMRAKEFLMEDSYTFSDSPEQMNEQYAKLRQAYQNIFDRLEIQYVIVEADGGKIGKGKSEEFHVLSSLGEDTLCVSGHYGANIEAAVAQPPQYTYDKDYLPIEEVDTPDVRTIENLQDFFSVPPYRIMKTLVVKLSYGEKEKFTAIGIRGDRQINLTKIGSKLNADACSLASDEEIQKHLGVEKGFIGPLNCPIDFYADETTQCMTNFICAGNVKDKHYKNVNWDRDIPRPEYADFLLAEAGDLCPTNNHAPYEIFEGVEVAHIFNLGTRYTEGFDVVFQDEQGKPQSCWMGTYGIGIGRTLAACIEQLADDRGIVWPKAIAPFDISILYNGGDTACEEAAEKIYKELQGYGYAPLLDDRNERLGFKLKDSDLIGIPYKLILGKTFLNSGMLEIESRSIEKFSVEPKDFVHWCKRHLPSPRVFSPIP.

This sequence belongs to the class-II aminoacyl-tRNA synthetase family. ProS type 1 subfamily. As to quaternary structure, homodimer.

The protein localises to the cytoplasm. The catalysed reaction is tRNA(Pro) + L-proline + ATP = L-prolyl-tRNA(Pro) + AMP + diphosphate. Its function is as follows. Catalyzes the attachment of proline to tRNA(Pro) in a two-step reaction: proline is first activated by ATP to form Pro-AMP and then transferred to the acceptor end of tRNA(Pro). As ProRS can inadvertently accommodate and process non-cognate amino acids such as alanine and cysteine, to avoid such errors it has two additional distinct editing activities against alanine. One activity is designated as 'pretransfer' editing and involves the tRNA(Pro)-independent hydrolysis of activated Ala-AMP. The other activity is designated 'posttransfer' editing and involves deacylation of mischarged Ala-tRNA(Pro). The misacylated Cys-tRNA(Pro) is not edited by ProRS. In Chlamydia abortus (strain DSM 27085 / S26/3) (Chlamydophila abortus), this protein is Proline--tRNA ligase.